Here is a 468-residue protein sequence, read N- to C-terminus: Argininosuccinate lyase (468 aa).

Residues S33, N121, and T166 each coordinate 2-(N(omega)-L-arginino)succinate. The active-site Proton acceptor is the H167. S288 (proton donor) is an active-site residue. Positions 296, 328, 333, and 336 each coordinate 2-(N(omega)-L-arginino)succinate.

This sequence belongs to the lyase 1 family. Argininosuccinate lyase subfamily. Homotetramer.

It catalyses the reaction 2-(N(omega)-L-arginino)succinate = fumarate + L-arginine. It functions in the pathway amino-acid biosynthesis; L-arginine biosynthesis; L-arginine from L-ornithine and carbamoyl phosphate: step 3/3. The sequence is that of Argininosuccinate lyase (ARG4) from Candida albicans (Yeast).